The chain runs to 418 residues: NADH-quinone oxidoreductase subunit D (418 aa).

It belongs to the complex I 49 kDa subunit family. NDH-1 is composed of 14 different subunits. Subunits NuoB, C, D, E, F, and G constitute the peripheral sector of the complex.

It is found in the cell inner membrane. The catalysed reaction is a quinone + NADH + 5 H(+)(in) = a quinol + NAD(+) + 4 H(+)(out). Its function is as follows. NDH-1 shuttles electrons from NADH, via FMN and iron-sulfur (Fe-S) centers, to quinones in the respiratory chain. The immediate electron acceptor for the enzyme in this species is believed to be ubiquinone. Couples the redox reaction to proton translocation (for every two electrons transferred, four hydrogen ions are translocated across the cytoplasmic membrane), and thus conserves the redox energy in a proton gradient. This is NADH-quinone oxidoreductase subunit D from Bordetella pertussis (strain Tohama I / ATCC BAA-589 / NCTC 13251).